A 363-amino-acid chain; its full sequence is Ribosomal RNA large subunit methyltransferase M (363 aa).

Residues Ser-194, 227 to 230 (CPGG), Asp-246, Asp-266, and Asp-284 each bind S-adenosyl-L-methionine. Lys-313 (proton acceptor) is an active-site residue.

Belongs to the class I-like SAM-binding methyltransferase superfamily. RNA methyltransferase RlmE family. RlmM subfamily. As to quaternary structure, monomer.

The protein resides in the cytoplasm. The enzyme catalyses cytidine(2498) in 23S rRNA + S-adenosyl-L-methionine = 2'-O-methylcytidine(2498) in 23S rRNA + S-adenosyl-L-homocysteine + H(+). Catalyzes the 2'-O-methylation at nucleotide C2498 in 23S rRNA. This is Ribosomal RNA large subunit methyltransferase M from Mannheimia succiniciproducens (strain KCTC 0769BP / MBEL55E).